The primary structure comprises 406 residues: MAFWIYVVPPLAGLVIGYFTNDIAIKMLFRPYRPYRVFGWRIPFTPGLIPQNQPRLAKQIAKTIMGSLLTPEELHNLARKLLQTERMQAGIRWLLGVALDRLQNPEQQQQTAQVLARILADLFNESLPRLVKVLARQETFLEGPINQLFDQVLLELRLSSEQAKQLSEWILKQALPPKVLRQNLVDFLTDRNIESLDEEFRERATGSYWVVANLFGLKNALLRLRTYCLEEPEGAEAILEDLLKDINASRRLTEILQNLSLQNLPVSAVRQLRRALRDGIQDYLRSQGPEVIKGLGETIDWEKVASLVLGRLRNSKALITSIDQISADLALVLERYLERDLESLMMQVIPVLNLDQVIADKVNATSPADLEQAIQQIVRQELQAIVNLGGLLGFLVGCVQVLFLLG.

2 helical membrane-spanning segments follow: residues 1–21 and 385–405; these read MAFW…YFTN and IVNL…LFLL.

The protein belongs to the UPF0754 family.

It localises to the cell inner membrane. This Synechococcus sp. (strain JA-2-3B'a(2-13)) (Cyanobacteria bacterium Yellowstone B-Prime) protein is UPF0754 membrane protein CYB_2931.